Reading from the N-terminus, the 113-residue chain is MSQSHLDDLFAYVEERCLWQFFSRTWDREENIEGVLNQVGRLLTGQEPLRGTPQERLFYADALAMANDVRERFPWASQVNKEEIEFLLDGLKSRLVDVTITRSTNRELNHHLY.

As to quaternary structure, hexamer of two alpha, two beta, and two delta chains. Iron-sulfur cluster serves as cofactor. Requires vanadium cation as cofactor.

The enzyme catalyses N2 + 8 reduced [2Fe-2S]-[ferredoxin] + 16 ATP + 16 H2O = H2 + 8 oxidized [2Fe-2S]-[ferredoxin] + 2 NH4(+) + 16 ADP + 16 phosphate + 6 H(+). In terms of biological role, the key enzymatic reactions in nitrogen fixation are catalyzed by the nitrogenase complex, which has 2 components: the iron protein (component 2) and a component 1 which is either a molybdenum-iron protein, a vanadium-iron, or an iron-iron protein. The sequence is that of Nitrogenase vanadium-iron protein delta chain (vnfG) from Azotobacter vinelandii.